We begin with the raw amino-acid sequence, 318 residues long: Actin-related protein 2/3 complex subunit 2A (318 aa).

Residues 297-318 are disordered; it reads RSMNNKSFKRLGLNEVNHTNSK.

This sequence belongs to the ARPC2 family. Component of the Arp2/3 complex composed of ARP2, ARP3, ARPC1/p41-ARC, ARPC2/p34-ARC, ARPC3/p21-ARC, ARPC4/p20-ARC and ARPC5/p16-ARC. Interacts with ARPC4. In terms of tissue distribution, expressed at low levels in all tissues with a relatively highest expression in inflorescences.

The protein localises to the cytoplasm. It is found in the cytoskeleton. Its subcellular location is the cell projection. In terms of biological role, functions as actin-binding component of the Arp2/3 complex which is involved in regulation of actin polymerization and together with an activating nucleation-promoting factor (NPF) mediates the formation of branched actin networks. Seems to contact the mother actin filament. Arp2/3 complex plays a critical role in the control of cell morphogenesis via the modulation of cell polarity development. The protein is Actin-related protein 2/3 complex subunit 2A (ARPC2A) of Arabidopsis thaliana (Mouse-ear cress).